The primary structure comprises 439 residues: Proline--tRNA ligase (439 aa).

It belongs to the class-II aminoacyl-tRNA synthetase family. ProS type 2 subfamily. Homodimer.

The protein localises to the cytoplasm. It catalyses the reaction tRNA(Pro) + L-proline + ATP = L-prolyl-tRNA(Pro) + AMP + diphosphate. In terms of biological role, catalyzes the attachment of proline to tRNA(Pro) in a two-step reaction: proline is first activated by ATP to form Pro-AMP and then transferred to the acceptor end of tRNA(Pro). The protein is Proline--tRNA ligase of Rhodopseudomonas palustris (strain HaA2).